We begin with the raw amino-acid sequence, 217 residues long: Small ribosomal subunit protein uS3c (217 aa).

The 72-residue stretch at 46 to 117 folds into the KH type-2 domain; that stretch reads VQKHIKNSSN…RLRMTLIEIA (72 aa).

It belongs to the universal ribosomal protein uS3 family. As to quaternary structure, part of the 30S ribosomal subunit.

The protein localises to the plastid. Its subcellular location is the chloroplast. The polypeptide is Small ribosomal subunit protein uS3c (rps3) (Marchantia polymorpha (Common liverwort)).